The primary structure comprises 481 residues: uncharacterized protein (481 aa).

The next 11 helical transmembrane spans lie at 14 to 34 (LGFC…GIFL), 46 to 66 (FAPM…IVFA), 90 to 110 (IGIY…GVLA), 134 to 154 (FSVK…INLF), 167 to 187 (TVGK…IITT), 218 to 238 (FSSM…FESI), 258 to 278 (IAIF…MLLG), 303 to 323 (IIVV…SFGA), 377 to 397 (LAVI…IALA), 411 to 431 (AFTD…LAVS), and 446 to 466 (YFSI…AYLH).

This sequence belongs to the amino acid-polyamine-organocation (APC) superfamily.

It is found in the cell membrane. In terms of biological role, probable amino-acid or metabolite transport protein. This is an uncharacterized protein from Mycobacterium tuberculosis (strain CDC 1551 / Oshkosh).